A 183-amino-acid chain; its full sequence is Translation initiation factor IF-3 (183 aa).

It belongs to the IF-3 family. Monomer.

It is found in the cytoplasm. IF-3 binds to the 30S ribosomal subunit and shifts the equilibrium between 70S ribosomes and their 50S and 30S subunits in favor of the free subunits, thus enhancing the availability of 30S subunits on which protein synthesis initiation begins. This Aliivibrio salmonicida (strain LFI1238) (Vibrio salmonicida (strain LFI1238)) protein is Translation initiation factor IF-3.